We begin with the raw amino-acid sequence, 49 residues long: Glutathione peroxidase (49 aa).

It belongs to the glutathione peroxidase family.

The enzyme catalyses 2 glutathione + H2O2 = glutathione disulfide + 2 H2O. With respect to regulation, inhibited by Cu(2+), SDS and DTT. Activity is slightly increased by Fe(2+), Mn(2+), triton X-100 and EDTA. Glutathione peroxidase which may protect the cell from oxidative damage. The sequence is that of Glutathione peroxidase from Lactiplantibacillus plantarum (Lactobacillus plantarum).